Consider the following 155-residue polypeptide: Ribonuclease H (155 aa).

An RNase H type-1 domain is found at 1 to 142 (MLKQVEIFTD…CDELARNAAG (142 aa)). Mg(2+)-binding residues include Asp10, Glu48, Asp70, and Asp134.

Belongs to the RNase H family. Monomer. The cofactor is Mg(2+).

Its subcellular location is the cytoplasm. The enzyme catalyses Endonucleolytic cleavage to 5'-phosphomonoester.. Endonuclease that specifically degrades the RNA of RNA-DNA hybrids. The protein is Ribonuclease H of Erwinia tasmaniensis (strain DSM 17950 / CFBP 7177 / CIP 109463 / NCPPB 4357 / Et1/99).